The following is a 362-amino-acid chain: Peptide chain release factor 1 (362 aa).

Gln-236 carries the N5-methylglutamine modification.

The protein belongs to the prokaryotic/mitochondrial release factor family. Post-translationally, methylated by PrmC. Methylation increases the termination efficiency of RF1.

It is found in the cytoplasm. Peptide chain release factor 1 directs the termination of translation in response to the peptide chain termination codons UAG and UAA. This is Peptide chain release factor 1 from Lactobacillus helveticus (strain DPC 4571).